The primary structure comprises 170 residues: Adenine phosphoribosyltransferase (170 aa).

Belongs to the purine/pyrimidine phosphoribosyltransferase family. In terms of assembly, homodimer.

The protein localises to the cytoplasm. It carries out the reaction AMP + diphosphate = 5-phospho-alpha-D-ribose 1-diphosphate + adenine. The protein operates within purine metabolism; AMP biosynthesis via salvage pathway; AMP from adenine: step 1/1. Functionally, catalyzes a salvage reaction resulting in the formation of AMP, that is energically less costly than de novo synthesis. The chain is Adenine phosphoribosyltransferase from Thermotoga neapolitana (strain ATCC 49049 / DSM 4359 / NBRC 107923 / NS-E).